We begin with the raw amino-acid sequence, 114 residues long: uncharacterized protein (114 aa).

Positions 18 to 29 are enriched in basic residues; the sequence is TRKRNSHKKVTK. Disordered stretches follow at residues 18–47 and 65–108; these read TRKRNSHKKVTKRAVEKRKQDSTRQKRRTG and SRPR…KLLN. Positions 30-41 are enriched in basic and acidic residues; sequence RAVEKRKQDSTR.

This is an uncharacterized protein from Homo sapiens (Human).